Here is an 84-residue protein sequence, read N- to C-terminus: Small ribosomal subunit protein bS18 (84 aa).

This sequence belongs to the bacterial ribosomal protein bS18 family. As to quaternary structure, part of the 30S ribosomal subunit. Forms a tight heterodimer with protein bS6.

Its function is as follows. Binds as a heterodimer with protein bS6 to the central domain of the 16S rRNA, where it helps stabilize the platform of the 30S subunit. This is Small ribosomal subunit protein bS18 from Dictyoglomus turgidum (strain DSM 6724 / Z-1310).